Here is an 880-residue protein sequence, read N- to C-terminus: DNA-directed RNA polymerase subunit beta C-terminal section (880 aa).

This sequence belongs to the RNA polymerase beta chain family. As to quaternary structure, in plastids the minimal PEP RNA polymerase catalytic core is composed of four subunits: alpha, beta, beta', and beta''. When a (nuclear-encoded) sigma factor is associated with the core the holoenzyme is formed, which can initiate transcription.

Its subcellular location is the plastid. It is found in the chloroplast. The enzyme catalyses RNA(n) + a ribonucleoside 5'-triphosphate = RNA(n+1) + diphosphate. Functionally, DNA-dependent RNA polymerase catalyzes the transcription of DNA into RNA using the four ribonucleoside triphosphates as substrates. This Pleurastrum terricola (Filamentous green alga) protein is DNA-directed RNA polymerase subunit beta C-terminal section (rpoB2).